Consider the following 182-residue polypeptide: UPF0397 protein YdcD (182 aa).

Helical transmembrane passes span 8–28 (IVVA…LINI), 42–62 (AVLA…IGFI), 74–94 (APWW…AFGV), 114–134 (IVQF…GDVL), and 146–166 (QGIV…TLLL).

It belongs to the UPF0397 family.

The protein resides in the cell membrane. This Lactococcus lactis subsp. lactis (strain IL1403) (Streptococcus lactis) protein is UPF0397 protein YdcD (ydcD).